We begin with the raw amino-acid sequence, 566 residues long: Protein OBERON 1 (566 aa).

Over residues 1–10 (MGTSSGSNLP) the composition is skewed to polar residues. Residues 1–79 (MGTSSGSNLP…KTGPDSHDQH (79 aa)) form a disordered region. A compositionally biased stretch (low complexity) spans 18–29 (QQLQTSLSLVSS). A compositionally biased stretch (polar residues) spans 47 to 60 (ESASSQETWPTSKS). A compositionally biased stretch (basic and acidic residues) spans 64-79 (RKTDSGKTGPDSHDQH). The segment at 225–289 (LCMCVICNKF…LFKCRACNHT (65 aa)) adopts a PHD-type zinc-finger fold. The stretch at 407–522 (EEKTRMYKKA…LFEKIKEQES (116 aa)) forms a coiled coil. The disordered stretch occupies residues 545–566 (YNASSPRVDPRSNQRNPFRSNP). Residues 555–566 (RSNQRNPFRSNP) are compositionally biased toward polar residues.

As to quaternary structure, self-interacts. Interacts with OBE2, OBE3 and OBE4. Binds to VPg of pea seed borne mosaic virus (PSbMV), turnip mosaic virus (TuMV) and lettuce mosaic virus (LMV), but not with VPg of tobacco etch virus (TEV), cowpea mosaic virus (CPMV), tomato black ring virus (TBRV) and grapevine fan leaf virus (GFLV). Interacts with RBL. In terms of tissue distribution, expressed in roots, seedlings, stems, leaves, flowers and siliques, especially in the vasculature.

It localises to the nucleus. It is found in the nucleoplasm. In terms of biological role, probable transcription factor that acts together with OBE2 for the maintenance and/or establishment of both the shoot and root meristems, probably by controlling the expression of the meristem genes such as WUS, PLT1 and PLT2 and of genes required for auxin responses. Promotes cell meristematic activity via the WUSCHEL-CLAVATA pathway. Involved in the development of the basal pole and in auxin-mediated root and vascular development in the embryo. Confers sensitivity to turnip mosaic virus (TuMV) probably by promoting viral movement and multiplication via interaction with TuMV VPg. The polypeptide is Protein OBERON 1 (Arabidopsis thaliana (Mouse-ear cress)).